Reading from the N-terminus, the 450-residue chain is Serine/threonine-protein kinase-transforming protein Rmil (450 aa).

Composition is skewed to basic and acidic residues over residues 1–14 and 49–73; these read MEAV…DQGV and QRER…RDSS. The tract at residues 1 to 80 is disordered; it reads MEAVIKDLIR…DSSDDWEIPD (80 aa). The 261-residue stretch at 83–343 folds into the Protein kinase domain; that stretch reads ITVGQRIGSG…PQILASIELL (261 aa). Residues 89–97 and Lys-109 each bind ATP; that span reads IGSGSFGTV. Residue Asp-202 is the Proton acceptor of the active site.

The protein belongs to the protein kinase superfamily. TKL Ser/Thr protein kinase family. RAF subfamily.

The catalysed reaction is L-seryl-[protein] + ATP = O-phospho-L-seryl-[protein] + ADP + H(+). The enzyme catalyses L-threonyl-[protein] + ATP = O-phospho-L-threonyl-[protein] + ADP + H(+). This is Serine/threonine-protein kinase-transforming protein Rmil (V-RMIL) from Avian rous-associated virus type 1.